Here is a 175-residue protein sequence, read N- to C-terminus: Peptide deformylase (175 aa).

Fe cation-binding residues include cysteine 99 and histidine 141. Glutamate 142 is a catalytic residue. Histidine 145 provides a ligand contact to Fe cation.

This sequence belongs to the polypeptide deformylase family. It depends on Fe(2+) as a cofactor.

The catalysed reaction is N-terminal N-formyl-L-methionyl-[peptide] + H2O = N-terminal L-methionyl-[peptide] + formate. Functionally, removes the formyl group from the N-terminal Met of newly synthesized proteins. Requires at least a dipeptide for an efficient rate of reaction. N-terminal L-methionine is a prerequisite for activity but the enzyme has broad specificity at other positions. This Rickettsia akari (strain Hartford) protein is Peptide deformylase.